The following is a 143-amino-acid chain: Large-conductance mechanosensitive channel (143 aa).

A run of 2 helical transmembrane segments spans residues F10–S30 and G89–V109.

This sequence belongs to the MscL family. Homopentamer.

It is found in the cell inner membrane. Channel that opens in response to stretch forces in the membrane lipid bilayer. May participate in the regulation of osmotic pressure changes within the cell. The sequence is that of Large-conductance mechanosensitive channel from Burkholderia cenocepacia (strain ATCC BAA-245 / DSM 16553 / LMG 16656 / NCTC 13227 / J2315 / CF5610) (Burkholderia cepacia (strain J2315)).